The following is a 66-amino-acid chain: Toxin Cll1 (66 aa).

Residues 1 to 66 (KEGYLVNKST…TYPLPNKSCS (66 aa)) form the LCN-type CS-alpha/beta domain. 4 cysteine pairs are disulfide-bonded: Cys12/Cys65, Cys16/Cys41, Cys25/Cys46, and Cys29/Cys48.

It belongs to the long (4 C-C) scorpion toxin superfamily. Sodium channel inhibitor family. Beta subfamily. In terms of tissue distribution, expressed by the venom gland.

The protein resides in the secreted. In terms of biological role, beta toxin that binds site-4 of sodium channels (Nav) and reduces peak current (observed on Nav1.1/SCN1A, Nav1.2/SCN2A, Nav1.3/SCN3A, Nav1.4/SCN5A, Nav1.5/SCN4A, and Nav1.6/SCN8A (IC(50)=44.9 nM)), shifts the voltage of activation toward more negative potentials (observed on Nav1.6, Nav1.1 (weak), Nav1.2 (weak), and Nav1.7 (weak)), and induces resurgent currents at negative voltages following brief and strong depolarizations (observed on Nav1.6, Nav1.1 (weak), Nav1.2 (weak), and Nav1.4 (weak)). This toxin is only active on crustaceans. The sequence is that of Toxin Cll1 from Centruroides limpidus (Mexican scorpion).